A 335-amino-acid polypeptide reads, in one-letter code: MDDQATRPTAATSPVLVIAGLTGSGKTLAIQQLEQLGYTGLEGIPPDQAVYLIEAIRPRHPALAVSLNLHTPEYREQFLAFDRWRQAQGIPFLFLEARPLVLLNRLSAHRRPHPHRPGLGLLEAIEQEVRDLAPVRERCTHLLDTSELNSQQLRQQLQALVHGIPQPLNLRLVSFGFKYGAPPDANLLFDVRFLPNPFFQPHLRHLTGQDPPLQEFLFADPVTQSTYRQIFSLVQAFWPHYRAERRPHLTVAIGCTGGQHRSVALVERLAEDLRPWAVPTDNPALPALNIQVQHRHLLDSQRELEARFGPPPPAAGVEQQQVRIPLAGVPAPPHD.

20–27 (GLTGSGKT) contributes to the ATP binding site. Positions 306–335 (ARFGPPPPAAGVEQQQVRIPLAGVPAPPHD) are disordered.

Belongs to the RapZ-like family.

Functionally, displays ATPase and GTPase activities. The polypeptide is Nucleotide-binding protein CYA_0911 (Synechococcus sp. (strain JA-3-3Ab) (Cyanobacteria bacterium Yellowstone A-Prime)).